Consider the following 260-residue polypeptide: MSPVQPLAGRQAADDPLIRLQEVAVTFGGRSILQDVRLEVVPGRITTLVGNNGAGKTTLLRVVVGLTHTAAGRVWRAPQVRIGYVPQHFSVDANLPITARRFMALSGRANAARWQEVVADTGVEELLDQPLQGLSGGEMRRILLARALLQHPSVLALDEPAAGLDGRSQGALYRLIGTLRQRYGCAVVIISHDLNLVMAASDEVLCLEHGRIACRGAPASVIEHPEYQKLFGSHLGPDTGVFPHDHHDHSGPALAGGGRG.

One can recognise an ABC transporter domain in the interval 18-234 (IRLQEVAVTF…PEYQKLFGSH (217 aa)). Position 50 to 57 (50 to 57 (GNNGAGKT)) interacts with ATP. Positions 241-260 (VFPHDHHDHSGPALAGGGRG) are disordered.

This sequence belongs to the ABC transporter superfamily. Zinc importer (TC 3.A.1.15.5) family. In terms of assembly, the complex is composed of two ATP-binding proteins (ZnuC), two transmembrane proteins (ZnuB) and a solute-binding protein (ZnuA).

It localises to the cell inner membrane. It catalyses the reaction Zn(2+)(out) + ATP(in) + H2O(in) = Zn(2+)(in) + ADP(in) + phosphate(in) + H(+)(in). Its function is as follows. Part of the ABC transporter complex ZnuABC involved in zinc import. Responsible for energy coupling to the transport system. This is Zinc import ATP-binding protein ZnuC from Halorhodospira halophila (strain DSM 244 / SL1) (Ectothiorhodospira halophila (strain DSM 244 / SL1)).